The primary structure comprises 322 residues: Protein-methionine-sulfoxide reductase catalytic subunit MsrP (322 aa).

Residues 1–59 (MSFRDALNLPSSEITDESVYRDRRRLLQLLALTPALGVAGCAEADPPPPPKTVVTPAQA) constitute a signal peptide (tat-type signal). Mo-molybdopterin contacts are provided by residues Asn79, 82-83 (YE), Cys137, Thr172, Asn220, Arg225, and 236-238 (SIK).

Belongs to the MsrP family. Heterodimer of a catalytic subunit (MsrP) and a heme-binding subunit (MsrQ). It depends on Mo-molybdopterin as a cofactor. Predicted to be exported by the Tat system. The position of the signal peptide cleavage has not been experimentally proven.

It is found in the periplasm. The enzyme catalyses L-methionyl-[protein] + a quinone + H2O = L-methionyl-(S)-S-oxide-[protein] + a quinol. The catalysed reaction is L-methionyl-[protein] + a quinone + H2O = L-methionyl-(R)-S-oxide-[protein] + a quinol. In terms of biological role, part of the MsrPQ system that repairs oxidized periplasmic proteins containing methionine sulfoxide residues (Met-O), using respiratory chain electrons. Thus protects these proteins from oxidative-stress damage caused by reactive species of oxygen and chlorine generated by the host defense mechanisms. MsrPQ is essential for the maintenance of envelope integrity under bleach stress, rescuing a wide series of structurally unrelated periplasmic proteins from methionine oxidation. The catalytic subunit MsrP is non-stereospecific, being able to reduce both (R-) and (S-) diastereoisomers of methionine sulfoxide. The chain is Protein-methionine-sulfoxide reductase catalytic subunit MsrP from Xanthomonas axonopodis pv. citri (strain 306).